The following is a 631-amino-acid chain: Phosphomethylpyrimidine synthase (631 aa).

Residues Asn239, Met268, Tyr297, His333, 353–355, 394–397, and Glu433 contribute to the substrate site; these read SRG and DGLR. His437 is a Zn(2+) binding site. Tyr460 serves as a coordination point for substrate. His501 contributes to the Zn(2+) binding site. [4Fe-4S] cluster is bound by residues Cys581, Cys584, and Cys589.

This sequence belongs to the ThiC family. As to quaternary structure, homodimer. Requires [4Fe-4S] cluster as cofactor.

It carries out the reaction 5-amino-1-(5-phospho-beta-D-ribosyl)imidazole + S-adenosyl-L-methionine = 4-amino-2-methyl-5-(phosphooxymethyl)pyrimidine + CO + 5'-deoxyadenosine + formate + L-methionine + 3 H(+). The protein operates within cofactor biosynthesis; thiamine diphosphate biosynthesis. In terms of biological role, catalyzes the synthesis of the hydroxymethylpyrimidine phosphate (HMP-P) moiety of thiamine from aminoimidazole ribotide (AIR) in a radical S-adenosyl-L-methionine (SAM)-dependent reaction. The sequence is that of Phosphomethylpyrimidine synthase from Escherichia coli (strain 55989 / EAEC).